Consider the following 270-residue polypeptide: Formamidopyrimidine-DNA glycosylase (270 aa).

The active-site Schiff-base intermediate with DNA is Pro2. Glu3 (proton donor) is an active-site residue. Lys58 acts as the Proton donor; for beta-elimination activity in catalysis. 3 residues coordinate DNA: His91, Arg110, and Arg151. Residues 236–270 form an FPG-type zinc finger; it reads LVYGRDGLPCPNCGRALKHATIGQRASVWCSHCQR. Catalysis depends on Arg260, which acts as the Proton donor; for delta-elimination activity.

It belongs to the FPG family. Monomer. Requires Zn(2+) as cofactor.

The catalysed reaction is Hydrolysis of DNA containing ring-opened 7-methylguanine residues, releasing 2,6-diamino-4-hydroxy-5-(N-methyl)formamidopyrimidine.. The enzyme catalyses 2'-deoxyribonucleotide-(2'-deoxyribose 5'-phosphate)-2'-deoxyribonucleotide-DNA = a 3'-end 2'-deoxyribonucleotide-(2,3-dehydro-2,3-deoxyribose 5'-phosphate)-DNA + a 5'-end 5'-phospho-2'-deoxyribonucleoside-DNA + H(+). Involved in base excision repair of DNA damaged by oxidation or by mutagenic agents. Acts as a DNA glycosylase that recognizes and removes damaged bases. Has a preference for oxidized purines, such as 7,8-dihydro-8-oxoguanine (8-oxoG). Has AP (apurinic/apyrimidinic) lyase activity and introduces nicks in the DNA strand. Cleaves the DNA backbone by beta-delta elimination to generate a single-strand break at the site of the removed base with both 3'- and 5'-phosphates. The sequence is that of Formamidopyrimidine-DNA glycosylase from Stenotrophomonas maltophilia (strain R551-3).